A 190-amino-acid polypeptide reads, in one-letter code: Cysteine dioxygenase (190 aa).

Residues histidine 78, histidine 80, and histidine 132 each coordinate Fe cation. Residues 85–149 (CFVKILDGEL…SNGAVSLHLY (65 aa)) constitute a cross-link (3'-(S-cysteinyl)-tyrosine (Cys-Tyr)).

Belongs to the cysteine dioxygenase family. It depends on Fe cation as a cofactor. In terms of processing, the thioether cross-link between Cys-85 and Tyr-149 plays a structural role through stabilizing the Fe(2+) ion, and prevents the production of highly damaging free hydroxyl radicals by holding the oxygen radical via hydroxyl hydrogen.

The enzyme catalyses L-cysteine + O2 = 3-sulfino-L-alanine + H(+). The protein operates within organosulfur biosynthesis; taurine biosynthesis; hypotaurine from L-cysteine: step 1/2. The polypeptide is Cysteine dioxygenase (cdo-1) (Caenorhabditis briggsae).